A 36-amino-acid polypeptide reads, in one-letter code: Glycine-rich protein GWK (36 aa).

The tract at residues Tyr1–Gly36 is disordered.

Possesses antifungal activity against a number of phytopathogenic fungi, including H.sativum and F.culmorum. The chain is Glycine-rich protein GWK from Cucumis melo (Muskmelon).